A 548-amino-acid chain; its full sequence is Natural resistance-associated macrophage protein 1 (548 aa).

The segment at 1–38 (MPGDMGPPKQGGTRYGSISSPPSPGPQQAPPGGTYLSE) is disordered. Residues 1–55 (MPGDMGPPKQGGTRYGSISSPPSPGPQQAPPGGTYLSEKIPIPDTESGAFSLRKL) lie on the Cytoplasmic side of the membrane. Residues 56–73 (WAFTGPGFLMSIAFLDPG) traverse the membrane as a helical segment. Residues 74–82 (NIESDLQAG) lie on the Extracellular side of the membrane. A helical membrane pass occupies residues 83–102 (AVAGFKLLWVLLWATVLGLL). At 103 to 139 (CQRLAARLGVVTGKDLGEVCHLYYPKVPRILLWLTIE) the chain is on the cytoplasmic side. The helical transmembrane segment at 140 to 160 (LAIVGSDMQEVIGTAIAFSLL) threads the bilayer. The Extracellular portion of the chain corresponds to 161–164 (SAGR). The helical transmembrane segment at 165-184 (IPLWGGVLITIVDTFFFLFL) threads the bilayer. Residues 185 to 193 (DNYGLRKLE) lie on the Cytoplasmic side of the membrane. A helical membrane pass occupies residues 194–214 (AFFGFLITIMALTFGYEYVVA). At 215-237 (RPAQGALLQGLFLPSCAGCGQPE) the chain is on the extracellular side. A helical membrane pass occupies residues 238–256 (LLQAVGIVGAIIMPHNIYL). Residues 257 to 284 (HSSLVKSREVDRSRRADIREANMYFLIE) lie on the Cytoplasmic side of the membrane. A helical transmembrane segment spans residues 285–304 (ATIALSVSFLINLFVMAVFG). At 305-346 (QAFYKQTNQAAFNICANSSLHDYATIFPRNNLTVAVDIYQGG) the chain is on the extracellular side. N-linked (GlcNAc...) asparagine glycans are attached at residues Asn-321 and Asn-335. The helical transmembrane segment at 347–366 (VILGCLFGPAALYIWAVGLL) threads the bilayer. The Cytoplasmic segment spans residues 367-397 (AAGQSSTMTGTYAGQFVMEGFLKLRWSRFAR). A helical transmembrane segment spans residues 398-415 (VLLTRSCAILPTVLVAVF). Residues 416–426 (RDLRDLSGLND) lie on the Extracellular side of the membrane. A helical membrane pass occupies residues 427–447 (LLNVLQSLLLPFAVLPILTFT). Over 448 to 463 (SMPAVMQEFANGLVSK) the chain is Cytoplasmic. A helical transmembrane segment spans residues 464 to 485 (VISSSIMVLVCAVNLYFVISYV). The Extracellular segment spans residues 486–493 (PSLPHPDY). A helical transmembrane segment spans residues 494 to 513 (FSLVALLAAAYLGLTTYLVW). Topologically, residues 514–548 (TCLITQGATLLAHSSHQRFLYGLPEEDQENGRTSG) are cytoplasmic.

The protein belongs to the NRAMP family.

It localises to the late endosome membrane. The protein localises to the lysosome membrane. The enzyme catalyses Zn(2+)(in) + H(+)(out) = Zn(2+)(out) + H(+)(in). It carries out the reaction Fe(2+)(in) + H(+)(out) = Fe(2+)(out) + H(+)(in). The catalysed reaction is Mn(2+)(in) + H(+)(out) = Mn(2+)(out) + H(+)(in). In terms of biological role, macrophage-specific antiporter that fluxes metal ions in either direction against a proton gradient. Localized to late endosomal lysosomal membranes, delivers bivalent cations from the cytosol into these acidic compartments where they may directly affect antimicrobial activity. Involved in iron metabolism and host natural resistance to infection with intracellular parasites. Pathogen resistance involves sequestration of Fe(2+) and Mn(2+), cofactors of both prokaryotic and eukaryotic catalases and superoxide dismutases, not only to protect the macrophage against its own generation of reactive oxygen species, but to deny the cations to the pathogen for synthesis of its protective enzymes. This is Natural resistance-associated macrophage protein 1 (SLC11A1) from Cervus elaphus (Red deer).